Consider the following 98-residue polypeptide: Transcription elongation factor A protein-like 7 (98 aa).

The span at 1-24 (MQRSCNEKEGKPKCSEPKREEEHP) shows a compositional bias: basic and acidic residues. Residues 1–31 (MQRSCNEKEGKPKCSEPKREEEHPYGAFEGQ) are disordered. Positions 59–89 (GEEMTGEEEEMERCLEEIRSLRKKFRALHSN) form a coiled coil.

It belongs to the TFS-II family. TFA subfamily.

The protein resides in the nucleus. Plays a role in the negative regulation of NF-kappa-B signaling at the basal level by modulating transcriptional activity of NF-kappa-B on its target gene promoters. Associates with cyclin D1 promoter containing Myc E-box sequence and transcriptionally represses cyclin D1 expression. Regulates telomerase reverse transcriptase expression and telomerase activity in both ALT (alternative lengthening of telomeres)and telomerase-positive cell lines. This chain is Transcription elongation factor A protein-like 7 (Tceal7), found in Rattus norvegicus (Rat).